The following is a 312-amino-acid chain: Porphobilinogen deaminase (312 aa).

C243 is subject to S-(dipyrrolylmethanemethyl)cysteine.

This sequence belongs to the HMBS family. In terms of assembly, monomer. It depends on dipyrromethane as a cofactor.

The catalysed reaction is 4 porphobilinogen + H2O = hydroxymethylbilane + 4 NH4(+). It participates in porphyrin-containing compound metabolism; protoporphyrin-IX biosynthesis; coproporphyrinogen-III from 5-aminolevulinate: step 2/4. Tetrapolymerization of the monopyrrole PBG into the hydroxymethylbilane pre-uroporphyrinogen in several discrete steps. This chain is Porphobilinogen deaminase, found in Vibrio campbellii (strain ATCC BAA-1116).